Here is a 722-residue protein sequence, read N- to C-terminus: Polyribonucleotide nucleotidyltransferase (722 aa).

Mg(2+) is bound by residues aspartate 495 and aspartate 501. The 60-residue stretch at 562-621 (PRLLSFRIDPELIGTVIGPGGRTIKGITERTNTKIDIEDGGIVTIASHDGVAAEEAQKII) folds into the KH domain. The 69-residue stretch at 631 to 699 (GEVFTGSITR…NRGRINLTLR (69 aa)) folds into the S1 motif domain.

Belongs to the polyribonucleotide nucleotidyltransferase family. Mg(2+) serves as cofactor.

It is found in the cytoplasm. The enzyme catalyses RNA(n+1) + phosphate = RNA(n) + a ribonucleoside 5'-diphosphate. Functionally, involved in mRNA degradation. Catalyzes the phosphorolysis of single-stranded polyribonucleotides processively in the 3'- to 5'-direction. This Prochlorococcus marinus (strain SARG / CCMP1375 / SS120) protein is Polyribonucleotide nucleotidyltransferase.